Here is a 1187-residue protein sequence, read N- to C-terminus: AT-rich interactive domain-containing protein 5B (1187 aa).

A Glycyl lysine isopeptide (Lys-Gly) (interchain with G-Cter in SUMO2) cross-link involves residue K130. Positions 251–279 are disordered; that stretch reads RPRKKKPCPQRRDSFSGVKDSNNNSDGKA. A Phosphoserine modification is found at S264. One can recognise an ARID domain in the interval 319 to 411; that stretch reads RADEQAFLVA…LILPYERFIK (93 aa). K337 is modified (N6,N6-dimethyllysine). The tract at residues 413-611 is disordered; it reads EEDKPLPPIK…QPPLASQSEL (199 aa). Residue K446 forms a Glycyl lysine isopeptide (Lys-Gly) (interchain with G-Cter in SUMO2) linkage. Positions 447-459 are enriched in basic and acidic residues; that stretch reads HEIPKSKKEKENA. Residues 460–469 are compositionally biased toward low complexity; sequence PKPQESPEVS. Glycyl lysine isopeptide (Lys-Gly) (interchain with G-Cter in SUMO2) cross-links involve residues K494 and K496. Residues 512 to 522 are compositionally biased toward basic and acidic residues; it reads ADPEKDSDADR. The segment covering 527–537 has biased composition (low complexity); the sequence is ATAAEEAGEQG. Glycyl lysine isopeptide (Lys-Gly) (interchain with G-Cter in SUMO2) cross-links involve residues K767, K774, K803, K810, K893, K916, K920, K935, K988, K1000, and K1013. The interval 891–977 is disordered; sequence DKKPAPAEAP…YPEPLSRASR (87 aa). Phosphoserine is present on S1032. Residues 1032–1065 are disordered; that stretch reads SPLDPPKEACGKDKGAELEGEGGKAAAAHGGPAA. A compositionally biased stretch (basic and acidic residues) spans 1036–1048; that stretch reads PPKEACGKDKGAE. Glycyl lysine isopeptide (Lys-Gly) (interchain with G-Cter in SUMO2) cross-links involve residues K1055 and K1069. Residues 1055–1065 show a composition bias toward low complexity; it reads KAAAAHGGPAA. The residue at position 1132 (S1132) is a Phosphoserine.

This sequence belongs to the ARID5B family. Methylation at Lys-337 prevents DNA-binding. Demethylation by PHF2 promotes recruitment of the PHF2-ARID5B complex to promoters.

The protein localises to the nucleus. Transcription coactivator that binds to the 5'-AATA[CT]-3' core sequence and plays a key role in adipogenesis and liver development. Acts by forming a complex with phosphorylated PHF2, which mediates demethylation at Lys-337, leading to target the PHF2-ARID5B complex to target promoters, where PHF2 mediates demethylation of dimethylated 'Lys-9' of histone H3 (H3K9me2), followed by transcription activation of target genes. The PHF2-ARID5B complex acts as a coactivator of HNF4A in liver. Required for adipogenesis: regulates triglyceride metabolism in adipocytes by regulating expression of adipogenic genes. Overexpression leads to induction of smooth muscle marker genes, suggesting that it may also act as a regulator of smooth muscle cell differentiation and proliferation. This is AT-rich interactive domain-containing protein 5B (ARID5B) from Canis lupus familiaris (Dog).